Here is a 424-residue protein sequence, read N- to C-terminus: Gamma-glutamyl phosphate reductase (424 aa).

The interval 1-27 (MSVEAQSRSGAVDTQEPADLREQVHSA) is disordered.

It belongs to the gamma-glutamyl phosphate reductase family.

Its subcellular location is the cytoplasm. It carries out the reaction L-glutamate 5-semialdehyde + phosphate + NADP(+) = L-glutamyl 5-phosphate + NADPH + H(+). The protein operates within amino-acid biosynthesis; L-proline biosynthesis; L-glutamate 5-semialdehyde from L-glutamate: step 2/2. Catalyzes the NADPH-dependent reduction of L-glutamate 5-phosphate into L-glutamate 5-semialdehyde and phosphate. The product spontaneously undergoes cyclization to form 1-pyrroline-5-carboxylate. This chain is Gamma-glutamyl phosphate reductase, found in Mycolicibacterium smegmatis (strain ATCC 700084 / mc(2)155) (Mycobacterium smegmatis).